A 478-amino-acid chain; its full sequence is Receptor-interacting serine/threonine-protein kinase 3 (478 aa).

The residue at position 2 (Ser2) is a Phosphoserine. Residues 22-290 (LENLGFVGKG…CESKTNNVYI (269 aa)) enclose the Protein kinase domain. Residues 28–36 (VGKGGFGAV) and Lys51 contribute to the ATP site. Catalysis depends on Asp143, which acts as the Proton acceptor. Ser165 bears the Phosphoserine mark. Residue Thr185 is modified to Phosphothreonine. Residue Ser201 is modified to Phosphoserine; by autocatalysis. Thr228 bears the Phosphothreonine mark. Ser229 is subject to Phosphoserine; by autocatalysis. Residue Thr254 is modified to Phosphothreonine. A phosphoserine mark is found at Ser301 and Ser323. A disordered region spans residues 311-330 (RSSDTKLSARESSQKGTEVD). A compositionally biased stretch (basic and acidic residues) spans 313–330 (SDTKLSARESSQKGTEVD). Position 335 is a phosphothreonine (Thr335). Ser350, Ser369, and Ser380 each carry phosphoserine. The tract at residues 362 to 429 (ERRGKEASFG…RNSNPWYTWN (68 aa)) is disordered. Positions 376–385 (AGTSSDTLAG) are enriched in polar residues. Thr392 is subject to Phosphothreonine. Residues 413–429 (QRNQGDGRNSNPWYTWN) show a composition bias toward polar residues. The short motif at 437–461 (LQSIVLNNCSEVQIGQHNCMSVQPR) is the RIP homotypic interaction motif (RHIM) element. Omega-N-methylarginine is present on Arg474.

The protein belongs to the protein kinase superfamily. TKL Ser/Thr protein kinase family. Interacts (via RIP homotypic interaction motif) with RIPK1 (via RIP homotypic interaction motif); this interaction induces RIPK1 phosphorylation and formation of a RIPK1-RIPK3 necrosis-inducing complex. Interacts with MLKL; the interaction is direct and triggers necroptosis. Interacts with ZBP1 (via RIP homotypic interaction motif); interaction with ZBP1 activates RIPK3, triggering necroptosis. Upon TNF-induced necrosis, the RIPK1-RIPK3 dimer further interacts with PGAM5 and MLKL; the formation of this complex leads to PGAM5 phosphorylation and increase in PGAM5 phosphatase activity. Binds TRAF2 and is recruited to the TNFR-1 signaling complex. Interacts with PYGL, GLUL and GLUD1; these interactions result in activation of these metabolic enzymes. Interacts with BIRC2/c-IAP1, BIRC3/c-IAP2 and XIAP/BIRC4. Interacts with ARHGEF2. Interacts with PELI1 (via atypical FHA domain); the phosphorylated form at Thr-185 binds preferentially to PELI1. Interacts with BUB1B, TRAF2 and STUB1. Interacts with CASP6. Component of the AIM2 PANoptosome complex, a multiprotein complex that drives inflammatory cell death (PANoptosis). RIPK1 and RIPK3 undergo reciprocal auto- and trans-phosphorylation. Autophosphorylated following interaction with ZBP1. Phosphorylation of Ser-201 plays a role in the necroptotic function of RIPK3. Autophosphorylates at Thr-228 and Ser-229 following activation by ZBP1: phosphorylation at these sites is a hallmark of necroptosis and is required for binding MLKL. Phosphorylation at Thr-185 is important for its kinase activity, interaction with PELI1 and for its ability to mediate TNF-induced necroptosis. In terms of processing, polyubiquitinated with 'Lys-48' and 'Lys-63'-linked chains by BIRC2/c-IAP1 and BIRC3/c-IAP2, leading to activation of NF-kappa-B. Ubiquitinated by STUB1 leading to its subsequent proteasome-dependent degradation.

The protein localises to the cytoplasm. Its subcellular location is the cytosol. The protein resides in the nucleus. It carries out the reaction L-seryl-[protein] + ATP = O-phospho-L-seryl-[protein] + ADP + H(+). It catalyses the reaction L-threonyl-[protein] + ATP = O-phospho-L-threonyl-[protein] + ADP + H(+). Its activity is regulated as follows. Activity is stimulated by ZBP1, which senses double-stranded Z-RNA structures. RIPK3-dependent necroptosis is inhibited by RIPK1: RIPK1 prevents the ZBP1-induced activation of RIPK3 via FADD-mediated recruitment of CASP8, which cleaves RIPK1 and limits TNF-induced necroptosis. Serine/threonine-protein kinase that activates necroptosis and apoptosis, two parallel forms of cell death. Necroptosis, a programmed cell death process in response to death-inducing TNF-alpha family members, is triggered by RIPK3 following activation by ZBP1. Activated RIPK3 forms a necrosis-inducing complex and mediates phosphorylation of MLKL, promoting MLKL localization to the plasma membrane and execution of programmed necrosis characterized by calcium influx and plasma membrane damage. In addition to TNF-induced necroptosis, necroptosis can also take place in the nucleus in response to orthomyxoviruses infection: following ZBP1 activation, which senses double-stranded Z-RNA structures, nuclear RIPK3 catalyzes phosphorylation and activation of MLKL, promoting disruption of the nuclear envelope and leakage of cellular DNA into the cytosol. Also regulates apoptosis: apoptosis depends on RIPK1, FADD and CASP8, and is independent of MLKL and RIPK3 kinase activity. Phosphorylates RIPK1: RIPK1 and RIPK3 undergo reciprocal auto- and trans-phosphorylation. In some cell types, also able to restrict viral replication by promoting cell death-independent responses. In response to flavivirus infection in neurons, promotes a cell death-independent pathway that restricts viral replication: together with ZBP1, promotes a death-independent transcriptional program that modifies the cellular metabolism via up-regulation expression of the enzyme ACOD1/IRG1 and production of the metabolite itaconate. Itaconate inhibits the activity of succinate dehydrogenase, generating a metabolic state in neurons that suppresses replication of viral genomes. RIPK3 binds to and enhances the activity of three metabolic enzymes: GLUL, GLUD1, and PYGL. These metabolic enzymes may eventually stimulate the tricarboxylic acid cycle and oxidative phosphorylation, which could result in enhanced ROS production. The polypeptide is Receptor-interacting serine/threonine-protein kinase 3 (Rattus norvegicus (Rat)).